A 303-amino-acid polypeptide reads, in one-letter code: 4-hydroxy-tetrahydrodipicolinate synthase (303 aa).

Threonine 57 contacts pyruvate. Tyrosine 143 (proton donor/acceptor) is an active-site residue. Lysine 171 acts as the Schiff-base intermediate with substrate in catalysis. Isoleucine 211 lines the pyruvate pocket.

It belongs to the DapA family. In terms of assembly, homotetramer; dimer of dimers.

It is found in the cytoplasm. The catalysed reaction is L-aspartate 4-semialdehyde + pyruvate = (2S,4S)-4-hydroxy-2,3,4,5-tetrahydrodipicolinate + H2O + H(+). It functions in the pathway amino-acid biosynthesis; L-lysine biosynthesis via DAP pathway; (S)-tetrahydrodipicolinate from L-aspartate: step 3/4. In terms of biological role, catalyzes the condensation of (S)-aspartate-beta-semialdehyde [(S)-ASA] and pyruvate to 4-hydroxy-tetrahydrodipicolinate (HTPA). The sequence is that of 4-hydroxy-tetrahydrodipicolinate synthase from Bifidobacterium animalis subsp. lactis (strain AD011).